The sequence spans 493 residues: MAFYSAVEAVLGVTWLSALFTLGSLSVFWLLRHRERKSQHALHNAWAQISAFDPSSLDRSKTADDWKTTRLGKATLVSNRYAHEIRNDERLSFQLGLEQDFLTTVPGLESLFGGTFHNGIVWDAAMHFSRKLNTVVDPLSEETIEYLQKNWGDDKEWHTVPLHHSMLMLIAQLTARLFIGEELCRDPEWLGIATGYTMDRTFAVKELQQWNPRLIPVVHWFLPSCRKLRATIKKARGFVDRVRTERKQKKTTADDTNRVDAMTWIDSVARDQNCSYDATLTQLRLAYAAVHTTGDMMTKVVAALCENPEMIEPLRKEIISIISEHGWREAALHKMTLLDSVLKESQRIQPLGLYTLSRIALEPITLDDGTQIKKGEQVKISTDHMWNSSIWPDAAQFDGYRFQRFRDNPDQSSAVSFVSLSANHMGFGYGKHACPGRFLAAIEAKVALCHLLLKYDFELENKEASAAQTEGVMIWRDHRAQLRIKRRVEKIEW.

A helical membrane pass occupies residues 10–30 (VLGVTWLSALFTLGSLSVFWL). Residue Cys-434 participates in heme binding.

The protein belongs to the cytochrome P450 family. Heme serves as cofactor.

It is found in the membrane. It functions in the pathway secondary metabolite biosynthesis; terpenoid biosynthesis. Cytochrome P450 monooxygenasee; part of the cluster that mediates the biosynthesis of shearones, diterpenoid pyrones (DPs) which are structurally diverse meroterpenoids consisting of a diterpene linked by a pyrone, and which may exhibit a range of bioactivities. Whitin the pathway, esdpG takes part in the molecular scaffold modification via the hydroxylation at C-11 and C-12 and can transform shearone A into shearone C and shearone B into shearone D. The molecular scaffold is commonly biosynthesized by a series of enzymes including the non-reducing polyketide synthase (NR-PKS) esdpA that generates an alpha-pyrone; the prenyltransferase esdpC that attaches a geranylgeranyl pyrophosphate (GGPP) produced by the GGPP synthase (GGPPS) esdpD onto the pyrone unit; the FAD-dependent monooxygenase esdpE that converts an olefin on the diterpene unit into an epoxide; and the terpene cyclase esdpB that catalyzes the cyclization reactions to give the molecular backbone shearone A. In the modification steps, esdpF oxidizes the hydroxy group to a ketone at C-3 and esdpG then attaches hydroxy groups at both C-11 and C-12. After that, esdpI hydroxylates at C-20 and esdpH hydroxylates at C-6'. The ether bridge is generated by nucleophilic attack of the hydroxy group at C-20 to the carbonyl carbon at C-3. EsdpH can also functions prior to esdpI. The different combinations of these modification enzymes lead to the production of diverse shearone derivatives, shearone I being the end product of the pathway. The alpha-ketoglutarate-dependent dioxygenase esdpJ seems not to be involved in this pathway. This chain is Cytochrome P450 monooxygenase esdpG, found in Penicillium shearii (Eupenicillium shearii).